A 774-amino-acid polypeptide reads, in one-letter code: Transmembrane GTPase fzo-1 (774 aa).

Residues 1–29 (MSGTASLVHTLPASGDSNHRGLHSLKNSR) are disordered. The Cytoplasmic portion of the chain corresponds to 1–617 (MSGTASLVHT…EEQAMMTQMV (617 aa)). Basic residues predominate over residues 20–29 (RGLHSLKNSR). Residues 51–71 (YGELKDNVAELEGVYKDIKEN) adopt a coiled-coil conformation. The region spanning 97–352 (QRDNMKVVFF…TRALEFQNFE (256 aa)) is the Dynamin-type G domain. Residues 107–114 (GRTSNGKS) form a G1 motif region. Residue 110–115 (SNGKST) participates in GTP binding. The G2 motif stretch occupies residues 133–134 (TT). The G3 motif stretch occupies residues 211 to 214 (DSPG). 270 to 273 (NRWD) is a GTP binding site. A G4 motif region spans residues 270-273 (NRWD). Residue glutamate 300 is a region of interest, G5 motif. Serine 317 is a GTP binding site. The stretch at 385–415 (NLNSVLTSAAEQRSKLQNNLNESTRTFNECR) forms a coiled coil. The helical transmembrane segment at 618–638 (LTSAAFLANGSLGVLVVGGIV) threads the bilayer. Residues 639–640 (YK) lie on the Mitochondrial intermembrane side of the membrane. The chain crosses the membrane as a helical span at residues 641–661 (AVGWRVIAVGGAAYAGLYAWE). Topologically, residues 662 to 774 (RMRWNSGAKE…YLRSDSPPTP (113 aa)) are cytoplasmic.

It belongs to the TRAFAC class dynamin-like GTPase superfamily. Dynamin/Fzo/YdjA family. Mitofusin subfamily. As to quaternary structure, interacts with ced-9; interaction may be suppressed by interaction of ced-9 with egl-1.

The protein resides in the mitochondrion outer membrane. The enzyme catalyses GTP + H2O = GDP + phosphate + H(+). Probable transmembrane GTPase. Mediates mitochondrial fusion. Fusion of mitochondria occurs in many cell types and constitutes an important step in mitochondria morphology, which is balanced between fusion and fission. Dispensable for normal apoptotic processes during embryonic development. This is Transmembrane GTPase fzo-1 from Caenorhabditis elegans.